A 914-amino-acid polypeptide reads, in one-letter code: Sensor protein TorS (914 aa).

Over 1–8 the chain is Cytoplasmic; sequence MNLTLTRR. A helical membrane pass occupies residues 9–29; it reads LWMGFALMALLTLTSTLVGWY. Over 30 to 332 the chain is Periplasmic; sequence NLRFISQVEK…EKASARGQYS (303 aa). The helical transmembrane segment at 333 to 353 threads the bilayer; that stretch reads LLLLGMVSLCALILILWRVVY. An HAMP domain is found at 354 to 407; sequence RSVTRPLAEQTQALQRLLDGDIDSPFPETAGVRELDTIGRLMDAFRSNVHALNR. Over 354–914 the chain is Cytoplasmic; sequence RSVTRPLAEQ…WLHKKDLNAI (561 aa). The 215-residue stretch at 450-664 folds into the Histidine kinase domain; the sequence is AMSHEIRTPL…CFCLRLPLRV (215 aa). A Phosphohistidine; by autocatalysis modification is found at His453. One can recognise a Response regulatory domain in the interval 683-798; that stretch reads RLLLIEDNPL…VLGQLLAHYL (116 aa). Residue Asp733 is modified to 4-aspartylphosphate. The 94-residue stretch at 821–914 folds into the HPt domain; the sequence is GTEKIHEWLV…WLHKKDLNAI (94 aa). His860 carries the post-translational modification Phosphohistidine.

May form homomultimers. Seems to interact with TorT and TorC apocytochrome. Post-translationally, activation requires a sequential transfer of a phosphate group from a His in the primary transmitter domain, to an Asp in the receiver domain and to a His in the secondary transmitter domain.

The protein resides in the cell inner membrane. The catalysed reaction is ATP + protein L-histidine = ADP + protein N-phospho-L-histidine.. Its activity is regulated as follows. Inhibited by TorC apocytochrome. Its function is as follows. Member of the two-component regulatory system TorS/TorR involved in the anaerobic utilization of trimethylamine-N-oxide (TMAO). Detects the presence of TMAO in the medium and, in response, activates TorR via a four-step phosphorelay. When TMAO is removed, TorS can dephosphorylate TorR, probably by a reverse phosphorelay involving His-860 and Asp-733. The sequence is that of Sensor protein TorS (torS) from Escherichia coli (strain K12).